Consider the following 124-residue polypeptide: Putative transmembrane protein FLJ36131 (124 aa).

Residues 1 to 2 (MY) lie on the Cytoplasmic side of the membrane. The chain crosses the membrane as a helical span at residues 3–23 (VSISFLLGLSHLVLCCLLTFI). The Extracellular portion of the chain corresponds to 24-124 (VNFYLPPESI…LLTTTSYSVS (101 aa)). Asparagine 41 is a glycosylation site (N-linked (GlcNAc...) asparagine).

It is found in the membrane. This is Putative transmembrane protein FLJ36131 from Homo sapiens (Human).